We begin with the raw amino-acid sequence, 348 residues long: Protein RecA (348 aa).

66–73 (GPESSGKT) lines the ATP pocket.

It belongs to the RecA family.

The protein resides in the cytoplasm. Can catalyze the hydrolysis of ATP in the presence of single-stranded DNA, the ATP-dependent uptake of single-stranded DNA by duplex DNA, and the ATP-dependent hybridization of homologous single-stranded DNAs. It interacts with LexA causing its activation and leading to its autocatalytic cleavage. This chain is Protein RecA, found in Burkholderia lata (strain ATCC 17760 / DSM 23089 / LMG 22485 / NCIMB 9086 / R18194 / 383).